The sequence spans 477 residues: Glycogen synthase (477 aa).

Lysine 15 serves as a coordination point for ADP-alpha-D-glucose.

Belongs to the glycosyltransferase 1 family. Bacterial/plant glycogen synthase subfamily.

It catalyses the reaction [(1-&gt;4)-alpha-D-glucosyl](n) + ADP-alpha-D-glucose = [(1-&gt;4)-alpha-D-glucosyl](n+1) + ADP + H(+). The protein operates within glycan biosynthesis; glycogen biosynthesis. Synthesizes alpha-1,4-glucan chains using ADP-glucose. This is Glycogen synthase from Anaeromyxobacter dehalogenans (strain 2CP-1 / ATCC BAA-258).